A 150-amino-acid chain; its full sequence is SsrA-binding protein (150 aa).

Residues 127–150 form a disordered region; it reads KRETEKQRDWQREKARIMKGDAKD.

This sequence belongs to the SmpB family.

Its subcellular location is the cytoplasm. Functionally, required for rescue of stalled ribosomes mediated by trans-translation. Binds to transfer-messenger RNA (tmRNA), required for stable association of tmRNA with ribosomes. tmRNA and SmpB together mimic tRNA shape, replacing the anticodon stem-loop with SmpB. tmRNA is encoded by the ssrA gene; the 2 termini fold to resemble tRNA(Ala) and it encodes a 'tag peptide', a short internal open reading frame. During trans-translation Ala-aminoacylated tmRNA acts like a tRNA, entering the A-site of stalled ribosomes, displacing the stalled mRNA. The ribosome then switches to translate the ORF on the tmRNA; the nascent peptide is terminated with the 'tag peptide' encoded by the tmRNA and targeted for degradation. The ribosome is freed to recommence translation, which seems to be the essential function of trans-translation. The protein is SsrA-binding protein of Cupriavidus necator (strain ATCC 17699 / DSM 428 / KCTC 22496 / NCIMB 10442 / H16 / Stanier 337) (Ralstonia eutropha).